The following is a 370-amino-acid chain: Neutral protease 2 homolog AFUB_070680 (370 aa).

Residues 1–19 (MKVTILASAILALINGALA) form the signal peptide. Residues 20–172 (LPANTPTLDV…PQAIKLLDRR (153 aa)) constitute a propeptide that is removed on maturation. 2 disulfide bridges follow: Cys178/Cys250 and Cys257/Cys275. His300 provides a ligand contact to Zn(2+). Glu301 is an active-site residue. Residues His304 and Asp315 each contribute to the Zn(2+) site.

This sequence belongs to the peptidase M35 family. Zn(2+) is required as a cofactor.

It is found in the secreted. The catalysed reaction is Preferential cleavage of bonds with hydrophobic residues in P1'. Also 3-Asn-|-Gln-4 and 8-Gly-|-Ser-9 bonds in insulin B chain.. Secreted metalloproteinase that allows assimilation of proteinaceous substrates. Shows high activities on basic nuclear substrates such as histone and protamine. May be involved in virulence. The protein is Neutral protease 2 homolog AFUB_070680 of Aspergillus fumigatus (strain CBS 144.89 / FGSC A1163 / CEA10) (Neosartorya fumigata).